The following is a 374-amino-acid chain: Quinolinate synthase (374 aa).

Positions 53 and 70 each coordinate iminosuccinate. Cysteine 116 contributes to the [4Fe-4S] cluster binding site. Iminosuccinate contacts are provided by residues 148–150 (YMN) and serine 169. Cysteine 236 serves as a coordination point for [4Fe-4S] cluster. Iminosuccinate-binding positions include 262–264 (HPE) and threonine 279. Cysteine 327 serves as a coordination point for [4Fe-4S] cluster.

The protein belongs to the quinolinate synthase family. Type 3 subfamily. It depends on [4Fe-4S] cluster as a cofactor.

The protein resides in the cytoplasm. It carries out the reaction iminosuccinate + dihydroxyacetone phosphate = quinolinate + phosphate + 2 H2O + H(+). The protein operates within cofactor biosynthesis; NAD(+) biosynthesis; quinolinate from iminoaspartate: step 1/1. Its function is as follows. Catalyzes the condensation of iminoaspartate with dihydroxyacetone phosphate to form quinolinate. This is Quinolinate synthase from Halobacterium salinarum (strain ATCC 29341 / DSM 671 / R1).